A 423-amino-acid chain; its full sequence is Methylenetetrahydrofolate--tRNA-(uracil-5-)-methyltransferase TrmFO 2 (423 aa).

Residue 8–13 (GAGLSG) coordinates FAD.

It belongs to the MnmG family. TrmFO subfamily. Requires FAD as cofactor.

Its subcellular location is the cytoplasm. It catalyses the reaction uridine(54) in tRNA + (6R)-5,10-methylene-5,6,7,8-tetrahydrofolate + NADH + H(+) = 5-methyluridine(54) in tRNA + (6S)-5,6,7,8-tetrahydrofolate + NAD(+). It carries out the reaction uridine(54) in tRNA + (6R)-5,10-methylene-5,6,7,8-tetrahydrofolate + NADPH + H(+) = 5-methyluridine(54) in tRNA + (6S)-5,6,7,8-tetrahydrofolate + NADP(+). Its function is as follows. Catalyzes the folate-dependent formation of 5-methyl-uridine at position 54 (M-5-U54) in all tRNAs. This Mycoplasma capricolum subsp. capricolum (strain California kid / ATCC 27343 / NCTC 10154) protein is Methylenetetrahydrofolate--tRNA-(uracil-5-)-methyltransferase TrmFO 2.